We begin with the raw amino-acid sequence, 328 residues long: Carbonic anhydrase-related protein 11 (328 aa).

The N-terminal stretch at 1–23 (MGAAARLSAPRALVLWAALGAAA) is a signal peptide. Residues 33 to 303 (DWWSYKDNLQ…LAHRALRGNR (271 aa)) enclose the Alpha-carbonic anhydrase domain. Residues N118, N170, and N260 are each glycosylated (N-linked (GlcNAc...) asparagine). The tract at residues 299 to 328 (LRGNRDPRHPERRCRGPNYRLHVDGAPHGR) is disordered. Residues 319 to 328 (LHVDGAPHGR) are compositionally biased toward basic and acidic residues.

It belongs to the alpha-carbonic anhydrase family.

The protein resides in the secreted. Functionally, does not have a catalytic activity. The chain is Carbonic anhydrase-related protein 11 (CA11) from Pongo abelii (Sumatran orangutan).